The sequence spans 503 residues: Maturase K (503 aa).

It belongs to the intron maturase 2 family. MatK subfamily.

It is found in the plastid. It localises to the chloroplast. Usually encoded in the trnK tRNA gene intron. Probably assists in splicing its own and other chloroplast group II introns. This is Maturase K from Backhousia myrtifolia (Grey myrtle).